The chain runs to 149 residues: L-alanine exporter AlaE (149 aa).

The next 4 membrane-spanning stretches (helical) occupy residues 16-36 (FAMVVYCSVVNMLIEIFLSGM), 46-66 (LVAIPVNILIAWPYGVYRDLI), 83-105 (ADVLAYVTFQSPVYIIILLTVGA), and 115-135 (SSNIVVSMLMGAVYGYFLDYC).

Belongs to the AlaE exporter family.

It is found in the cell inner membrane. In terms of biological role, exports L-alanine. In Salmonella typhimurium (strain LT2 / SGSC1412 / ATCC 700720), this protein is L-alanine exporter AlaE.